The following is a 197-amino-acid chain: Ribonuclease HII (197 aa).

The RNase H type-2 domain occupies 11 to 197 (HLIAGVDEVG…FAPVKKILGL (187 aa)). A divalent metal cation-binding residues include aspartate 17, glutamate 18, and aspartate 109.

The protein belongs to the RNase HII family. The cofactor is Mn(2+). Mg(2+) serves as cofactor.

The protein localises to the cytoplasm. It carries out the reaction Endonucleolytic cleavage to 5'-phosphomonoester.. Endonuclease that specifically degrades the RNA of RNA-DNA hybrids. The protein is Ribonuclease HII of Actinobacillus pleuropneumoniae serotype 5b (strain L20).